Here is a 347-residue protein sequence, read N- to C-terminus: Aromatic amino acid aminotransferase (347 aa).

Residue K214 is modified to N6-(pyridoxal phosphate)lysine.

The protein belongs to the class-II pyridoxal-phosphate-dependent aminotransferase family. Homodimer. Pyridoxal 5'-phosphate serves as cofactor.

The enzyme catalyses an aromatic L-alpha-amino acid + 2-oxoglutarate = an aromatic oxo-acid + L-glutamate. Functionally, aminotransferase that catalyzes the conversion of aromatic amino acids and 2-oxoglutarate into corresponding aromatic oxo acids and L-glutamate. The polypeptide is Aromatic amino acid aminotransferase (Mycobacteroides abscessus (strain ATCC 19977 / DSM 44196 / CCUG 20993 / CIP 104536 / JCM 13569 / NCTC 13031 / TMC 1543 / L948) (Mycobacterium abscessus)).